An 836-amino-acid polypeptide reads, in one-letter code: Protein IWS1 homolog A (836 aa).

The segment at 1 to 542 (MEADNYSPEH…DMKSGKMGDY (542 aa)) is disordered. Composition is skewed to basic and acidic residues over residues 20–36 (QDERDSASDDEGNEQRS), 43–122 (HQSE…DRSP), 133–148 (EPVRHSASDSEDDVPR), 157–186 (DERHIKKTASDSEDEAPAKHRVSDTEDKAP), 206–218 (DSKDEAPPKHAAS), 288–309 (VPVKRAASDSEEETHPKGKASD), 370–386 (RSSESDSSDKVDGKKLQ), and 458–469 (ERKSKTETKSAD). Positions 476-485 (SDSENEEENL) are enriched in acidic residues. Residues 533–542 (DMKSGKMGDY) show a composition bias toward basic and acidic residues. In terms of domain architecture, TFIIS N-terminal spans 631-709 (SAIKEWLTPL…NEWSRPIFGL (79 aa)). Positions 714-746 (KGMTREEREQRDIEQMPQRRRMSSSGGQTPRRD) are disordered. The segment covering 716 to 727 (MTREEREQRDIE) has biased composition (basic and acidic residues).

It belongs to the IWS1 family.

It localises to the nucleus. In terms of biological role, transcription factor which plays a key role in defining the composition of the RNA polymerase II (RNAPII) elongation complex and in modulating the production of mature mRNA transcripts. This chain is Protein IWS1 homolog A (iws1-a), found in Xenopus laevis (African clawed frog).